The following is a 145-amino-acid chain: Thioredoxin C-3 (145 aa).

Positions 25, 28, and 29 each coordinate heme. Residues 29 to 140 enclose the Thioredoxin domain; that stretch reads HQALLPLEPI…LQQWLDQQLQ (112 aa). A disulfide bridge links cysteine 65 with cysteine 68.

Belongs to the thioredoxin family.

Participates in various redox reactions through the reversible oxidation of its active center dithiol to a disulfide and catalyzes dithiol-disulfide exchange reactions. This is Thioredoxin C-3 from Corynebacterium nephridii.